A 185-amino-acid polypeptide reads, in one-letter code: HTH-type transcriptional regulator SAR2658 (185 aa).

An HTH tetR-type domain is found at 6–66 (KENRQRIEEI…YVIQRDLDIF (61 aa)). Positions 29-48 (SMNRIAKELGIGMGTLYRHF) form a DNA-binding region, H-T-H motif.

This Staphylococcus aureus (strain MRSA252) protein is HTH-type transcriptional regulator SAR2658.